The chain runs to 1161 residues: PAN2-PAN3 deadenylation complex catalytic subunit pan2 (1161 aa).

3 WD repeats span residues glycine 20 to serine 59, alanine 102 to glutamine 145, and alanine 276 to glutamate 315. The interval methionine 316–aspartate 452 is linker. In terms of domain architecture, USP spans aspartate 453–arginine 822. An Exonuclease domain is found at valine 871–leucine 1049. Positions 874, 876, 983, and 1042 each coordinate a divalent metal cation. The tract at residues glycine 1094–lysine 1161 is disordered. Residues valine 1097–threonine 1110 show a composition bias toward polar residues. Residues alanine 1116–proline 1129 are compositionally biased toward low complexity. The span at threonine 1145–phenylalanine 1155 shows a compositional bias: gly residues.

The protein belongs to the peptidase C19 family. PAN2 subfamily. In terms of assembly, forms a heterotrimer with an asymmetric homodimer of the regulatory subunit pan3 to form the poly(A)-nuclease (PAN) deadenylation complex. The cofactor is a divalent metal cation.

It is found in the cytoplasm. The enzyme catalyses Exonucleolytic cleavage of poly(A) to 5'-AMP.. Its activity is regulated as follows. Positively regulated by the regulatory subunit pan3. In terms of biological role, catalytic subunit of the poly(A)-nuclease (PAN) deadenylation complex, one of two cytoplasmic mRNA deadenylases involved in mRNA turnover. PAN specifically shortens poly(A) tails of RNA and the activity is stimulated by poly(A)-binding protein pab1. PAN deadenylation is followed by rapid degradation of the shortened mRNA tails by the CCR4-NOT complex. Deadenylated mRNAs are then degraded by two alternative mechanisms, namely exosome-mediated 3'-5' exonucleolytic degradation, or deadenylation-dependent mRNA decaping and subsequent 5'-3' exonucleolytic degradation by xrn1. May also be involved in post-transcriptional maturation of mRNA poly(A) tails. The polypeptide is PAN2-PAN3 deadenylation complex catalytic subunit pan2 (Aspergillus clavatus (strain ATCC 1007 / CBS 513.65 / DSM 816 / NCTC 3887 / NRRL 1 / QM 1276 / 107)).